Consider the following 320-residue polypeptide: Tryptophan--tRNA ligase (320 aa).

Residues 8 to 10 (QPT) and 16 to 17 (GN) each bind ATP. Positions 9-17 (PTGRPHWGN) match the 'HIGH' region motif. L-tryptophan is bound at residue Asp131. Residues 143-145 (GVD), Val182, and 189-193 (KMSKS) each bind ATP. The 'KMSKS' region motif lies at 189–193 (KMSKS).

Belongs to the class-I aminoacyl-tRNA synthetase family. In terms of assembly, homodimer.

It localises to the cytoplasm. The catalysed reaction is tRNA(Trp) + L-tryptophan + ATP = L-tryptophyl-tRNA(Trp) + AMP + diphosphate + H(+). In terms of biological role, catalyzes the attachment of tryptophan to tRNA(Trp). This is Tryptophan--tRNA ligase from Rhodopirellula baltica (strain DSM 10527 / NCIMB 13988 / SH1).